Here is a 384-residue protein sequence, read N- to C-terminus: MDAQDEDNPFTNLETTVDVTEEIQDWRFLSNVEKDQGTYTIPKRGQKDFEPDGTNKQHSALDLSRKAMFDALSVERLISAKHAIIATWNAQNGMSCVEKAHGPLFKTMGTADSQNRMWLLPEETLYLVERGSMECWSEEGLPMSLQAVYSASIPLCGSLENYLVYAHLRRCGFSVIRSNLVPVKEDEYRCDSKIMNFKDLLFLGLGKASQILQTFNFRKLAFPFSKRRRQSILLHDTFYTYEEVYHDLQIVRGYVPIACNLITSSDSLFQITFHAYKPSASFKKSALSEPDFRICVVSSQDTLLPTIFEIDALFSSTPLRQNMPQHMFQRLKEGYRNIIIAIVDYGVISYIRLSDVCFEEKVYTDFSKKGSKRKRVSKKFQQLV.

Residues 37–57 (GTYTIPKRGQKDFEPDGTNKQ) are disordered. Over residues 45-55 (GQKDFEPDGTN) the composition is skewed to basic and acidic residues.

This sequence belongs to the SEN54 family. TRNA splicing endonuclease is a heterotetramer composed of sen2, sen15, sen34 and sen54. Interacts directly with sen2.

Its function is as follows. Non-catalytic subunit of the tRNA-splicing endonuclease complex, a complex responsible for identification and cleavage of the splice sites in pre-tRNA. It cleaves pre-tRNA at the 5' and 3' splice sites to release the intron. The products are an intron and two tRNA half-molecules bearing 2',3' cyclic phosphate and 5'-OH termini. There are no conserved sequences at the splice sites, but the intron is invariably located at the same site in the gene, placing the splice sites an invariant distance from the constant structural features of the tRNA body. May be required to embody the molecular ruler of the complex. This is Probable tRNA-splicing endonuclease subunit sen54 (sen54) from Schizosaccharomyces pombe (strain 972 / ATCC 24843) (Fission yeast).